We begin with the raw amino-acid sequence, 200 residues long: Holliday junction branch migration complex subunit RuvA (200 aa).

The segment at 1–64 (MITSIQGTLV…EDSQTLYGFA (64 aa)) is domain I. A domain II region spans residues 65 to 144 (SPAERDFFRL…ATGAAPGLAT (80 aa)). A flexible linker region spans residues 145–151 (QPAAAAS). The tract at residues 152-200 (PGASAHRDAVAALVALGYRSADADEAVRRASLALGEAATTESLIKKALS) is domain III.

It belongs to the RuvA family. Homotetramer. Forms an RuvA(8)-RuvB(12)-Holliday junction (HJ) complex. HJ DNA is sandwiched between 2 RuvA tetramers; dsDNA enters through RuvA and exits via RuvB. An RuvB hexamer assembles on each DNA strand where it exits the tetramer. Each RuvB hexamer is contacted by two RuvA subunits (via domain III) on 2 adjacent RuvB subunits; this complex drives branch migration. In the full resolvosome a probable DNA-RuvA(4)-RuvB(12)-RuvC(2) complex forms which resolves the HJ.

Its subcellular location is the cytoplasm. Its function is as follows. The RuvA-RuvB-RuvC complex processes Holliday junction (HJ) DNA during genetic recombination and DNA repair, while the RuvA-RuvB complex plays an important role in the rescue of blocked DNA replication forks via replication fork reversal (RFR). RuvA specifically binds to HJ cruciform DNA, conferring on it an open structure. The RuvB hexamer acts as an ATP-dependent pump, pulling dsDNA into and through the RuvAB complex. HJ branch migration allows RuvC to scan DNA until it finds its consensus sequence, where it cleaves and resolves the cruciform DNA. The sequence is that of Holliday junction branch migration complex subunit RuvA from Opitutus terrae (strain DSM 11246 / JCM 15787 / PB90-1).